We begin with the raw amino-acid sequence, 458 residues long: Serine protease HTRA2, mitochondrial (458 aa).

The transit peptide at 1 to 31 (MAALRAGRGAGWSLRGWRALWGGRWGKGPLL) directs the protein to the mitochondrion. The propeptide occupies 32-133 (TPDLRALLTS…GGRGPPAVLA (102 aa)). Residues 105-125 (VWLAVALGAGGAVLLLFWGGG) form a helical membrane-spanning segment. The IAP-binding motif motif lies at 134–137 (SVLG). Residues 166 to 342 (ILGRHPFSGR…IPSDRLREFL (177 aa)) are serine protease. Active-site charge relay system residues include His198, Asp228, and Ser306. A PDZ domain is found at 364–445 (VMMLTLTPSI…QLAVRIRRGQ (82 aa)).

Belongs to the peptidase S1C family. In terms of assembly, homotrimer. Interacts with MXI2. Interacts with THAP5 under apoptotic conditions. The mature protein, but not the precursor, binds to BIRC2/c-IAP1, BIRC3/c-IAP2 and XIAP/BIRC4. Interacts with BIRC6/bruce. Interacts with AREL1 (via HECT domain); in the cytoplasm following induction of apoptosis. Post-translationally, ubiquitinated by BIRC6; this activity is inhibited by DIABLO/SMAC. In terms of processing, autoproteolytically activated.

It localises to the mitochondrion intermembrane space. It is found in the mitochondrion membrane. The enzyme catalyses Cleavage of non-polar aliphatic amino-acids at the P1 position, with a preference for Val, Ile and Met. At the P2 and P3 positions, Arg is selected most strongly with a secondary preference for other hydrophilic residues.. With respect to regulation, inhibited by BIRC6. In terms of biological role, serine protease that shows proteolytic activity against a non-specific substrate beta-casein. Promotes apoptosis by either relieving the inhibition of BIRC proteins on caspases, leading to an increase in caspase activity; or by a BIRC inhibition-independent, caspase-independent and serine protease activity-dependent mechanism. Cleaves BIRC6 and relieves its inhibition on CASP3, CASP7 and CASP9, but it is also prone to inhibition by BIRC6. Cleaves THAP5 and promotes its degradation during apoptosis. This chain is Serine protease HTRA2, mitochondrial (HTRA2), found in Bos taurus (Bovine).